Reading from the N-terminus, the 396-residue chain is Elongation factor Tu 2 (396 aa).

Residues 10-206 form the tr-type G domain; that stretch reads KPHVNVGTIG…TLDTYIPEPE (197 aa). Residues 19 to 26 form a G1 region; it reads GHVDHGKT. 19–26 contributes to the GTP binding site; sequence GHVDHGKT. Thr-26 contacts Mg(2+). The segment at 60-64 is G2; that stretch reads GITIN. The segment at 81–84 is G3; it reads DCPG. GTP contacts are provided by residues 81–85 and 136–139; these read DCPGH and NKCD. The interval 136-139 is G4; sequence NKCD. Residues 174–176 are G5; it reads SAL.

It belongs to the TRAFAC class translation factor GTPase superfamily. Classic translation factor GTPase family. EF-Tu/EF-1A subfamily. As to quaternary structure, monomer.

It localises to the cytoplasm. It carries out the reaction GTP + H2O = GDP + phosphate + H(+). Its function is as follows. GTP hydrolase that promotes the GTP-dependent binding of aminoacyl-tRNA to the A-site of ribosomes during protein biosynthesis. This chain is Elongation factor Tu 2, found in Psychrobacter sp. (strain PRwf-1).